Consider the following 267-residue polypeptide: Acyl-[acyl-carrier-protein]--UDP-N-acetylglucosamine O-acyltransferase (267 aa).

It belongs to the transferase hexapeptide repeat family. LpxA subfamily. Homotrimer.

The protein localises to the cytoplasm. The catalysed reaction is a (3R)-hydroxyacyl-[ACP] + UDP-N-acetyl-alpha-D-glucosamine = a UDP-3-O-[(3R)-3-hydroxyacyl]-N-acetyl-alpha-D-glucosamine + holo-[ACP]. It participates in glycolipid biosynthesis; lipid IV(A) biosynthesis; lipid IV(A) from (3R)-3-hydroxytetradecanoyl-[acyl-carrier-protein] and UDP-N-acetyl-alpha-D-glucosamine: step 1/6. Involved in the biosynthesis of lipid A, a phosphorylated glycolipid that anchors the lipopolysaccharide to the outer membrane of the cell. The sequence is that of Acyl-[acyl-carrier-protein]--UDP-N-acetylglucosamine O-acyltransferase from Cupriavidus pinatubonensis (strain JMP 134 / LMG 1197) (Cupriavidus necator (strain JMP 134)).